The sequence spans 253 residues: Probable transcriptional regulatory protein Hore_12350 (253 aa).

Residues 1–21 form a disordered region; that stretch reads MAGHSKWANIKHKKAKEDRKR.

It belongs to the TACO1 family.

It localises to the cytoplasm. This Halothermothrix orenii (strain H 168 / OCM 544 / DSM 9562) protein is Probable transcriptional regulatory protein Hore_12350.